The sequence spans 612 residues: MSAELIAVYKDEQIIDLESAKVLGLSDGVKALNGTEPIYFDDSPLALEVIRHSCAHLLAQSLKALYPDAKFFVGPVVEEGFYYDFKTASKISEEDLPKIEAKMKEFAKLKLAITKEVLTREQALERFKGDELKHAVMSKISGDKFGVYQQGEFEDLCKGPHLPNTRFLNHFKLTKLAGAYLGGDENNEMLIRIYGIAFATKEGLKDYLFQIEEAKKRNHRKLGVELGLFSFDDEIGAGLPLWLPKGARLRKRIEDLLSKALLLRGYEPVKGPEILKSDVWKISGHYDNYKENMYFTTIDEQEYGIKPMNCVGHIKVYQSALHSYRDLPLRFYEYGVVHRHEKSGVLHGLLRVREFTQDDAHIFCSFEQIQSEVSAILDFTHKIMQAFDFSYEMELSTRPAKSIGDDKVWEKATNALKEALKEHRIDYKIDEGGGAFYGPKIDIKITDALKRKWQCGTIQVDMNLPERFKLAFTNEHNHAEQPVMIHRAILGSFERFIAILSEHFGGNFPFFVAPTQIALIPINEEHHVFALKLKEALKKRDIFVEVLDKNDSLNKKVRLAEKQKIPMILVLGNEEVETEILSIRDREKQAQYKMPLKEFLNMVESKMQEVSF.

The segment at N218 to P509 is catalytic. Positions 310, 361, and 486 each coordinate Zn(2+).

This sequence belongs to the class-II aminoacyl-tRNA synthetase family. As to quaternary structure, homodimer. Zn(2+) is required as a cofactor.

Its subcellular location is the cytoplasm. The catalysed reaction is tRNA(Thr) + L-threonine + ATP = L-threonyl-tRNA(Thr) + AMP + diphosphate + H(+). Its function is as follows. Catalyzes the attachment of threonine to tRNA(Thr) in a two-step reaction: L-threonine is first activated by ATP to form Thr-AMP and then transferred to the acceptor end of tRNA(Thr). Also edits incorrectly charged L-seryl-tRNA(Thr). This chain is Threonine--tRNA ligase, found in Helicobacter pylori (strain Shi470).